Consider the following 114-residue polypeptide: Iron-sulfur cluster insertion protein ErpA (114 aa).

The iron-sulfur cluster site is built by Cys-42, Cys-106, and Cys-108.

Belongs to the HesB/IscA family. Homodimer. Iron-sulfur cluster serves as cofactor.

Functionally, required for insertion of 4Fe-4S clusters for at least IspG. The polypeptide is Iron-sulfur cluster insertion protein ErpA (Erwinia tasmaniensis (strain DSM 17950 / CFBP 7177 / CIP 109463 / NCPPB 4357 / Et1/99)).